The sequence spans 392 residues: Formate-dependent phosphoribosylglycinamide formyltransferase (392 aa).

N(1)-(5-phospho-beta-D-ribosyl)glycinamide-binding positions include 22-23 (EL) and glutamate 82. Residues arginine 114, lysine 155, 160–165 (SSGKGQ), 195–198 (EGLV), and glutamate 203 each bind ATP. An ATP-grasp domain is found at 119–308 (RLAAETLSLP…EFALHVRAFL (190 aa)). Mg(2+) is bound by residues glutamate 267 and glutamate 279. N(1)-(5-phospho-beta-D-ribosyl)glycinamide contacts are provided by residues aspartate 286, lysine 355, and 362 to 363 (RR).

It belongs to the PurK/PurT family. Homodimer.

The catalysed reaction is N(1)-(5-phospho-beta-D-ribosyl)glycinamide + formate + ATP = N(2)-formyl-N(1)-(5-phospho-beta-D-ribosyl)glycinamide + ADP + phosphate + H(+). Its pathway is purine metabolism; IMP biosynthesis via de novo pathway; N(2)-formyl-N(1)-(5-phospho-D-ribosyl)glycinamide from N(1)-(5-phospho-D-ribosyl)glycinamide (formate route): step 1/1. Its function is as follows. Involved in the de novo purine biosynthesis. Catalyzes the transfer of formate to 5-phospho-ribosyl-glycinamide (GAR), producing 5-phospho-ribosyl-N-formylglycinamide (FGAR). Formate is provided by PurU via hydrolysis of 10-formyl-tetrahydrofolate. The chain is Formate-dependent phosphoribosylglycinamide formyltransferase from Sodalis glossinidius (strain morsitans).